The following is a 126-amino-acid chain: Glycine cleavage system H protein (126 aa).

The 83-residue stretch at 20–102 (IGTIGITDYA…LGDGWFFKVR (83 aa)) folds into the Lipoyl-binding domain. Lys-61 carries the N6-lipoyllysine modification.

This sequence belongs to the GcvH family. In terms of assembly, the glycine cleavage system is composed of four proteins: P, T, L and H. (R)-lipoate serves as cofactor.

Its function is as follows. The glycine cleavage system catalyzes the degradation of glycine. The H protein shuttles the methylamine group of glycine from the P protein to the T protein. The protein is Glycine cleavage system H protein of Rhodospirillum rubrum (strain ATCC 11170 / ATH 1.1.1 / DSM 467 / LMG 4362 / NCIMB 8255 / S1).